The following is a 260-amino-acid chain: Snake venom serine protease KN14 (260 aa).

Residues M1–A18 form the signal peptide. The propeptide occupies Q19–L24. The 227-residue stretch at V25–A251 folds into the Peptidase S1 domain. 5 cysteine pairs are disulfide-bonded: C31/C165, C100/C258, C144/C212, C176/C191, and C202/C227. The Charge relay system role is filled by H67. N105 carries N-linked (GlcNAc...) asparagine glycosylation. D112 acts as the Charge relay system in catalysis. Residue N172 is glycosylated (N-linked (GlcNAc...) asparagine). S206 functions as the Charge relay system in the catalytic mechanism. N-linked (GlcNAc...) asparagine glycosylation is found at N213 and N255.

Belongs to the peptidase S1 family. Snake venom subfamily. Monomer. Expressed by the venom gland.

It is found in the secreted. Snake venom serine protease that may act in the hemostasis system of the prey. The polypeptide is Snake venom serine protease KN14 (Trimeresurus stejnegeri (Chinese green tree viper)).